Consider the following 263-residue polypeptide: Expansin-like A3 (263 aa).

Positions 1–20 (MRSFLYLIVVIFLFSSSVNA) are cleaved as a signal peptide. The Expansin-like EG45 domain occupies 41–147 (SGACAYGPMA…QRVPCNYGKR (107 aa)). N-linked (GlcNAc...) asparagine glycans are attached at residues N99 and N102. In terms of domain architecture, Expansin-like CBD spans 161-243 (NYLAIKLLYQ…NWNSGRIYDA (83 aa)).

The protein belongs to the expansin family. Expansin-like A subfamily.

It localises to the secreted. This is Expansin-like A3 (EXLA3) from Arabidopsis thaliana (Mouse-ear cress).